The chain runs to 552 residues: 2,3-bisphosphoglycerate-independent phosphoglycerate mutase (552 aa).

The segment covering Met-1 to Asp-25 has biased composition (polar residues). The tract at residues Met-1–Val-30 is disordered. Mn(2+) is bound by residues Asp-38 and Ser-88. Catalysis depends on Ser-88, which acts as the Phosphoserine intermediate. Substrate is bound by residues His-149, Arg-179–Asp-180, Arg-217, Arg-223, Arg-293–Arg-296, and Lys-373. Asp-440, His-444, Asp-481, His-482, and His-500 together coordinate Mn(2+).

This sequence belongs to the BPG-independent phosphoglycerate mutase family. In terms of assembly, monomer. The cofactor is Mn(2+).

The catalysed reaction is (2R)-2-phosphoglycerate = (2R)-3-phosphoglycerate. It participates in carbohydrate degradation; glycolysis; pyruvate from D-glyceraldehyde 3-phosphate: step 3/5. Functionally, catalyzes the interconversion of 2-phosphoglycerate and 3-phosphoglycerate. The sequence is that of 2,3-bisphosphoglycerate-independent phosphoglycerate mutase from Psychrobacter arcticus (strain DSM 17307 / VKM B-2377 / 273-4).